Consider the following 264-residue polypeptide: Thymidylate synthase (264 aa).

Arg-21 contributes to the dUMP binding site. Residue His-51 coordinates (6R)-5,10-methylene-5,6,7,8-tetrahydrofolate. 126–127 lines the dUMP pocket; that stretch reads RR. Cys-146 functions as the Nucleophile in the catalytic mechanism. Residues 166 to 169, Asn-177, and 207 to 209 contribute to the dUMP site; these read RSCD and HLY. Residue Asp-169 coordinates (6R)-5,10-methylene-5,6,7,8-tetrahydrofolate. Ala-263 is a (6R)-5,10-methylene-5,6,7,8-tetrahydrofolate binding site.

Belongs to the thymidylate synthase family. Bacterial-type ThyA subfamily. Homodimer.

It is found in the cytoplasm. The enzyme catalyses dUMP + (6R)-5,10-methylene-5,6,7,8-tetrahydrofolate = 7,8-dihydrofolate + dTMP. It participates in pyrimidine metabolism; dTTP biosynthesis. Functionally, catalyzes the reductive methylation of 2'-deoxyuridine-5'-monophosphate (dUMP) to 2'-deoxythymidine-5'-monophosphate (dTMP) while utilizing 5,10-methylenetetrahydrofolate (mTHF) as the methyl donor and reductant in the reaction, yielding dihydrofolate (DHF) as a by-product. This enzymatic reaction provides an intracellular de novo source of dTMP, an essential precursor for DNA biosynthesis. The protein is Thymidylate synthase of Shewanella oneidensis (strain ATCC 700550 / JCM 31522 / CIP 106686 / LMG 19005 / NCIMB 14063 / MR-1).